A 249-amino-acid chain; its full sequence is Probable transcriptional regulatory protein OTBS_0251 (249 aa).

The protein belongs to the TACO1 family.

It is found in the cytoplasm. The protein is Probable transcriptional regulatory protein OTBS_0251 of Orientia tsutsugamushi (strain Boryong) (Rickettsia tsutsugamushi).